Reading from the N-terminus, the 219-residue chain is Orotate phosphoribosyltransferase (219 aa).

Lys26 lines the 5-phospho-alpha-D-ribose 1-diphosphate pocket. Residue 34–35 (FF) participates in orotate binding. 5-phospho-alpha-D-ribose 1-diphosphate is bound by residues 72-73 (YK), Arg98, Lys99, Lys102, His104, and 124-132 (DDVITAGTA). The orotate site is built by Thr128 and Arg156.

Belongs to the purine/pyrimidine phosphoribosyltransferase family. PyrE subfamily. Homodimer. The cofactor is Mg(2+).

The catalysed reaction is orotidine 5'-phosphate + diphosphate = orotate + 5-phospho-alpha-D-ribose 1-diphosphate. It functions in the pathway pyrimidine metabolism; UMP biosynthesis via de novo pathway; UMP from orotate: step 1/2. Functionally, catalyzes the transfer of a ribosyl phosphate group from 5-phosphoribose 1-diphosphate to orotate, leading to the formation of orotidine monophosphate (OMP). The polypeptide is Orotate phosphoribosyltransferase (Xanthomonas campestris pv. campestris (strain 8004)).